Consider the following 231-residue polypeptide: 5'-methylthioadenosine/S-adenosylhomocysteine nucleosidase (231 aa).

Residue E12 is the Proton acceptor of the active site. Substrate is bound by residues G78, M153, and 174 to 175 (ME). Catalysis depends on D198, which acts as the Proton donor.

This sequence belongs to the PNP/UDP phosphorylase family. MtnN subfamily.

It catalyses the reaction S-adenosyl-L-homocysteine + H2O = S-(5-deoxy-D-ribos-5-yl)-L-homocysteine + adenine. The enzyme catalyses S-methyl-5'-thioadenosine + H2O = 5-(methylsulfanyl)-D-ribose + adenine. It carries out the reaction 5'-deoxyadenosine + H2O = 5-deoxy-D-ribose + adenine. Its pathway is amino-acid biosynthesis; L-methionine biosynthesis via salvage pathway; S-methyl-5-thio-alpha-D-ribose 1-phosphate from S-methyl-5'-thioadenosine (hydrolase route): step 1/2. Functionally, catalyzes the irreversible cleavage of the glycosidic bond in both 5'-methylthioadenosine (MTA) and S-adenosylhomocysteine (SAH/AdoHcy) to adenine and the corresponding thioribose, 5'-methylthioribose and S-ribosylhomocysteine, respectively. Also cleaves 5'-deoxyadenosine, a toxic by-product of radical S-adenosylmethionine (SAM) enzymes, into 5-deoxyribose and adenine. This is 5'-methylthioadenosine/S-adenosylhomocysteine nucleosidase from Psychromonas ingrahamii (strain DSM 17664 / CCUG 51855 / 37).